The sequence spans 182 residues: Superoxide dismutase [Cu-Zn] (182 aa).

The first 19 residues, 1-19, serve as a signal peptide directing secretion; sequence MFRTLTVVPLLALGLSLSA. A lipid anchor (N-palmitoyl cysteine) is attached at cysteine 20. Cysteine 20 carries S-diacylglycerol cysteine lipidation. Cu cation is bound by residues histidine 69, histidine 71, and histidine 95. A disulfide bond links cysteine 76 and cysteine 175. A disordered region spans residues 91–118; it reads AAGGHFDPGASHNHDGPHARNDQGHGGD. Positions 95, 104, 115, and 118 each coordinate Zn(2+). Over residues 102–115 the composition is skewed to basic and acidic residues; the sequence is HNHDGPHARNDQGH.

Belongs to the Cu-Zn superoxide dismutase family. Requires Cu cation as cofactor. Zn(2+) is required as a cofactor.

Its subcellular location is the cell membrane. The enzyme catalyses 2 superoxide + 2 H(+) = H2O2 + O2. Functionally, destroys radicals which are normally produced within the cells and which are toxic to biological systems. This is Superoxide dismutase [Cu-Zn] (sodC) from Deinococcus radiodurans (strain ATCC 13939 / DSM 20539 / JCM 16871 / CCUG 27074 / LMG 4051 / NBRC 15346 / NCIMB 9279 / VKM B-1422 / R1).